We begin with the raw amino-acid sequence, 533 residues long: Light-independent protochlorophyllide reductase subunit B (533 aa).

Asp36 lines the [4Fe-4S] cluster pocket. Asp292 (proton donor) is an active-site residue. 428–429 (GL) lines the substrate pocket.

It belongs to the ChlB/BchB/BchZ family. In terms of assembly, protochlorophyllide reductase is composed of three subunits; BchL, BchN and BchB. Forms a heterotetramer of two BchB and two BchN subunits. [4Fe-4S] cluster is required as a cofactor.

The enzyme catalyses chlorophyllide a + oxidized 2[4Fe-4S]-[ferredoxin] + 2 ADP + 2 phosphate = protochlorophyllide a + reduced 2[4Fe-4S]-[ferredoxin] + 2 ATP + 2 H2O. It participates in porphyrin-containing compound metabolism; bacteriochlorophyll biosynthesis (light-independent). Its function is as follows. Component of the dark-operative protochlorophyllide reductase (DPOR) that uses Mg-ATP and reduced ferredoxin to reduce ring D of protochlorophyllide (Pchlide) to form chlorophyllide a (Chlide). This reaction is light-independent. The NB-protein (BchN-BchB) is the catalytic component of the complex. In Prosthecochloris aestuarii (strain DSM 271 / SK 413), this protein is Light-independent protochlorophyllide reductase subunit B.